The sequence spans 2104 residues: 5'-3' DNA helicase ZGRF1 (2104 aa).

The span at 335-345 shows a compositional bias: polar residues; the sequence is SSPIHSSTVDG. Residues 335–359 are disordered; the sequence is SSPIHSSTVDGNDTERKPKAQEDDV. Serine 336 bears the Phosphoserine mark. The span at 347-356 shows a compositional bias: basic and acidic residues; the sequence is DTERKPKAQE. Phosphoserine is present on residues serine 793 and serine 864. Positions 1349, 1351, 1374, and 1382 each coordinate Zn(2+). Residues 1349 to 1391 form a GRF-type zinc finger; sequence CHHSQPAKLVMVKKEGPNKGRLFYTCDGPKADRCKFFKWLEDV. Residues 2085 to 2104 form a disordered region; the sequence is VEEKQKKKSEKEKSKDKSHS.

As to quaternary structure, interacts with DNA repair protein RAD51; the interaction promotes RAD51 strand exchange activity. Also interacts with DNA repair proteins EXO1 and BRCA1; the interactions are increased following DNA damage induction.

The protein localises to the nucleus. It catalyses the reaction ATP + H2O = ADP + phosphate + H(+). The enzyme catalyses Couples ATP hydrolysis with the unwinding of duplex DNA at the replication fork by translocating in the 5'-3' direction. This creates two antiparallel DNA single strands (ssDNA). The leading ssDNA polymer is the template for DNA polymerase III holoenzyme which synthesizes a continuous strand.. Functionally, 5'-3' DNA helicase which is recruited to sites of DNA damage and promotes repair of replication-blocking DNA lesions through stimulation of homologous recombination (HR). Promotes HR by directly stimulating RAD51-mediated strand exchange activity. Not required to load RAD51 at sites of DNA damage but promotes recombinational repair after RAD51 recruitment. Also promotes HR by positively regulating EXO1-mediated DNA end resection of double-strand breaks. Required for recruitment of replication protein RPA2 to DNA damage sites. Promotes the initiation of the G2/M checkpoint but not its maintenance. Catalyzes Holliday junction branch migration and dissociation of D-loops and DNA flaps. This Homo sapiens (Human) protein is 5'-3' DNA helicase ZGRF1 (ZGRF1).